A 354-amino-acid polypeptide reads, in one-letter code: Hyaluronan and proteoglycan link protein 1 (354 aa).

Residues 1–15 constitute a propeptide that is removed on maturation; it reads MKSLLLLVLISFCWA. 2 N-linked (GlcNAc...) asparagine glycosylation sites follow: asparagine 21 and asparagine 56. Residues 38–152 enclose the Ig-like V-type domain; that stretch reads PRLLVEAEQA…EGLEDDTAVV (115 aa). 5 cysteine pairs are disulfide-bonded: cysteine 61/cysteine 139, cysteine 181/cysteine 252, cysteine 205/cysteine 226, cysteine 279/cysteine 349, and cysteine 304/cysteine 325. 2 Link domains span residues 159-254 and 259-351; these read VVFP…FCFT and GRFY…YCFR.

It belongs to the HAPLN family.

The protein resides in the secreted. Its subcellular location is the extracellular space. It is found in the extracellular matrix. In terms of biological role, stabilizes the aggregates of proteoglycan monomers with hyaluronic acid in the extracellular cartilage matrix. The protein is Hyaluronan and proteoglycan link protein 1 (HAPLN1) of Bos taurus (Bovine).